Here is a 433-residue protein sequence, read N- to C-terminus: Histidine--tRNA ligase (433 aa).

This sequence belongs to the class-II aminoacyl-tRNA synthetase family. As to quaternary structure, homodimer.

It localises to the cytoplasm. It carries out the reaction tRNA(His) + L-histidine + ATP = L-histidyl-tRNA(His) + AMP + diphosphate + H(+). The sequence is that of Histidine--tRNA ligase from Blochmanniella floridana.